The sequence spans 492 residues: Glutamyl-tRNA(Gln) amidotransferase subunit A (492 aa).

Catalysis depends on charge relay system residues Lys-84 and Ser-159. The active-site Acyl-ester intermediate is Ser-183.

Belongs to the amidase family. GatA subfamily. As to quaternary structure, heterotrimer of A, B and C subunits.

It catalyses the reaction L-glutamyl-tRNA(Gln) + L-glutamine + ATP + H2O = L-glutaminyl-tRNA(Gln) + L-glutamate + ADP + phosphate + H(+). Functionally, allows the formation of correctly charged Gln-tRNA(Gln) through the transamidation of misacylated Glu-tRNA(Gln) in organisms which lack glutaminyl-tRNA synthetase. The reaction takes place in the presence of glutamine and ATP through an activated gamma-phospho-Glu-tRNA(Gln). This is Glutamyl-tRNA(Gln) amidotransferase subunit A from Anaeromyxobacter dehalogenans (strain 2CP-C).